Here is a 149-residue protein sequence, read N- to C-terminus: Evolved beta-galactosidase subunit beta (149 aa).

Heterooctamer of 4 alpha and 4 beta subunits.

In terms of biological role, required for full activity of the EbgA enzyme. Exact function not known. The protein is Evolved beta-galactosidase subunit beta (ebgC) of Escherichia coli O6:H1 (strain CFT073 / ATCC 700928 / UPEC).